We begin with the raw amino-acid sequence, 369 residues long: MRVIVTGGGTGGHIYPALAIAKGILVHQPDAEILYIGTREGMEARLVPEAGLEFAGVSGQGLPRKLSLETLKVGGKSFKALWETKQILKKFKPDLVVGTGGYVAGPVVLTAALFGIPTLLHEQNALPGITNKILTRFVRKVMVTFPESIAHFGVRRKLVLTGLPVRPEIGNISRERGAACLGLRSDCLTLLVTGGSRGARSINQAMPTVLKHLAGRKDIQVIWATGKATYQETLESLKTQGIQWQRENWRVLEYLKDMPEAMACADLFVGRAGATTLAEIMVAGKPGILIPYPLAAENHQEFNARALEKDGAACVILDKDLTGENLWALVQGLIEKPEKLRKMAQAARSLGQPDALNKIVKVCLDTAWK.

Residues 10-12 (TGG), asparagine 124, arginine 166, serine 196, and glutamine 300 contribute to the UDP-N-acetyl-alpha-D-glucosamine site.

It belongs to the glycosyltransferase 28 family. MurG subfamily.

It localises to the cell membrane. It catalyses the reaction di-trans,octa-cis-undecaprenyl diphospho-N-acetyl-alpha-D-muramoyl-L-alanyl-D-glutamyl-meso-2,6-diaminopimeloyl-D-alanyl-D-alanine + UDP-N-acetyl-alpha-D-glucosamine = di-trans,octa-cis-undecaprenyl diphospho-[N-acetyl-alpha-D-glucosaminyl-(1-&gt;4)]-N-acetyl-alpha-D-muramoyl-L-alanyl-D-glutamyl-meso-2,6-diaminopimeloyl-D-alanyl-D-alanine + UDP + H(+). The protein operates within cell wall biogenesis; peptidoglycan biosynthesis. In terms of biological role, cell wall formation. Catalyzes the transfer of a GlcNAc subunit on undecaprenyl-pyrophosphoryl-MurNAc-pentapeptide (lipid intermediate I) to form undecaprenyl-pyrophosphoryl-MurNAc-(pentapeptide)GlcNAc (lipid intermediate II). The sequence is that of UDP-N-acetylglucosamine--N-acetylmuramyl-(pentapeptide) pyrophosphoryl-undecaprenol N-acetylglucosamine transferase from Desulfitobacterium hafniense (strain DSM 10664 / DCB-2).